The chain runs to 547 residues: Apicoplast pyruvate carrier 1 (547 aa).

Residues 1-33 form a disordered region; the sequence is MEPRAPPRLSVSSPRRESGATVPSHSPSTLLSC. Topologically, residues 1–45 are cytoplasmic; the sequence is MEPRAPPRLSVSSPRRESGATVPSHSPSTLLSCASSETATEKRRR. A compositionally biased stretch (polar residues) spans 21–33; it reads TVPSHSPSTLLSC. The next 12 helical transmembrane spans lie at 46–66, 126–146, 167–187, 189–209, 212–232, 278–298, 345–365, 385–405, 417–437, 445–465, 467–487, and 515–535; these read WTGV…GTVY, AWVL…GGIA, VGMA…FGVI, GVGL…WFPE, GIVS…FSPL, LLAV…RVPA, ALVS…GLAI, ILTE…NAVG, GFQT…FFLP, LCYA…FSVF, SAVA…FIFG, and LMGL…ALSP.

Belongs to the major facilitator superfamily. As to quaternary structure, interacts with apicoplast pyruvate carrier 2.

It localises to the plastid. The protein localises to the apicoplast. Its subcellular location is the membrane. Along with apicoplast pyruvate carrier 2, forms apicoplast pyruvate carrier (APC) complex, which transports pyruvate into the apicoplast and may also transport amino acids like methionine, serine, glycine and tryptophan with low efficiency. Required for maintaining pyruvate-dependent metabolic activities in the apicoplast, such as synthesis of fatty acids, isopentenyl pyrophosphate (IPP), dimethylallyl pyrophosphate (DMAPP) and methylerythritol 4-phosphate (MEP). Required for maintaining the integrity of the apicoplast. Required for normal parasite growth. The polypeptide is Apicoplast pyruvate carrier 1 (Toxoplasma gondii).